The sequence spans 110 residues: Cuticle protein 13 (110 aa).

This Limulus polyphemus (Atlantic horseshoe crab) protein is Cuticle protein 13.